We begin with the raw amino-acid sequence, 90 residues long: Kunitz-type serine protease inhibitor B5 (90 aa).

A signal peptide spans 1–24; that stretch reads MSSGGLLLLLGLLTLWAELTPISG. Residues 31–81 form the BPTI/Kunitz inhibitor domain; the sequence is CYLPADPGECLAHMRSFYYDSESKKCKEFIYGGCHGNANKFPSRDKCRQTC. 3 disulfides stabilise this stretch: Cys-31–Cys-81, Cys-40–Cys-64, and Cys-56–Cys-77. The propeptide occupies 85-90; it reads AKGRPT.

The protein belongs to the venom Kunitz-type family. Expressed by the venom gland.

The protein localises to the secreted. Serine protease inhibitor. This Daboia siamensis (Eastern Russel's viper) protein is Kunitz-type serine protease inhibitor B5.